Here is a 110-residue protein sequence, read N- to C-terminus: Flagellar hook-basal body complex protein FliE (110 aa).

It belongs to the FliE family.

Its subcellular location is the bacterial flagellum basal body. The polypeptide is Flagellar hook-basal body complex protein FliE (Pseudomonas entomophila (strain L48)).